A 687-amino-acid chain; its full sequence is Putative ammonium transporter 3 (687 aa).

The next 11 helical transmembrane spans lie at 39–59 (AVWI…FGLL), 77–97 (VVDV…FSYG), 134–154 (ASFL…SGAV), 162–182 (SYIL…HWVW), 196–216 (FAGC…ATVF), 240–260 (LGTF…VWGI), 272–292 (AVAT…ISFV), 299–319 (VNFL…ICAV), 323–343 (WHAL…LPLL), 352–372 (VGIV…VGIF), and 404–424 (CTAA…FLIS). 3 disordered regions span residues 521 to 544 (RTNA…FNNQ), 549 to 568 (AVSS…RRTE), and 592 to 687 (PPEE…NPPV). Residues 549 to 564 (AVSSTVSTARNGPSTG) show a composition bias toward polar residues. Composition is skewed to low complexity over residues 614 to 632 (SPSS…SPSI) and 648 to 665 (STAS…KNST).

This sequence belongs to the ammonia transporter channel (TC 1.A.11.2) family.

It localises to the membrane. Functionally, involved in the uptake of ammonia. In Caenorhabditis elegans, this protein is Putative ammonium transporter 3 (amt-3).